The chain runs to 62 residues: Large ribosomal subunit protein bL28 (62 aa).

Belongs to the bacterial ribosomal protein bL28 family.

This is Large ribosomal subunit protein bL28 from Acholeplasma laidlawii (strain PG-8A).